The chain runs to 137 residues: Large ribosomal subunit protein bL17 (137 aa).

It belongs to the bacterial ribosomal protein bL17 family. In terms of assembly, part of the 50S ribosomal subunit. Contacts protein L32.

The chain is Large ribosomal subunit protein bL17 from Caulobacter sp. (strain K31).